The sequence spans 342 residues: Ferrochelatase (342 aa).

Fe cation contacts are provided by His188 and Glu268.

This sequence belongs to the ferrochelatase family.

Its subcellular location is the cytoplasm. The enzyme catalyses heme b + 2 H(+) = protoporphyrin IX + Fe(2+). It functions in the pathway porphyrin-containing compound metabolism; protoheme biosynthesis; protoheme from protoporphyrin-IX: step 1/1. Catalyzes the ferrous insertion into protoporphyrin IX. This Rickettsia typhi (strain ATCC VR-144 / Wilmington) protein is Ferrochelatase.